Reading from the N-terminus, the 48-residue chain is DNA-directed RNA polymerase subunit Rpo12 (48 aa).

Zn(2+)-binding residues include Cys-6, Cys-9, Cys-26, and Cys-29.

The protein belongs to the archaeal Rpo12/eukaryotic RPC10 RNA polymerase subunit family. In terms of assembly, part of the 13-subunit RNA polymerase. The cofactor is Zn(2+).

It is found in the cytoplasm. It carries out the reaction RNA(n) + a ribonucleoside 5'-triphosphate = RNA(n+1) + diphosphate. Functionally, DNA-dependent RNA polymerase (RNAP) catalyzes the transcription of DNA into RNA using the four ribonucleoside triphosphates as substrates. The polypeptide is DNA-directed RNA polymerase subunit Rpo12 (Sulfolobus acidocaldarius (strain ATCC 33909 / DSM 639 / JCM 8929 / NBRC 15157 / NCIMB 11770)).